The sequence spans 229 residues: Lipoprotein-releasing system ATP-binding protein LolD (229 aa).

Residues 9 to 228 form the ABC transporter domain; the sequence is HGLRKIYREA…QDGNLVQVEV (220 aa). 42–49 is a binding site for ATP; that stretch reads GSSGSGKS.

It belongs to the ABC transporter superfamily. Lipoprotein translocase (TC 3.A.1.125) family. In terms of assembly, the complex is composed of two ATP-binding proteins (LolD) and two transmembrane proteins (LolC and LolE).

It localises to the cell inner membrane. In terms of biological role, part of the ABC transporter complex LolCDE involved in the translocation of mature outer membrane-directed lipoproteins, from the inner membrane to the periplasmic chaperone, LolA. Responsible for the formation of the LolA-lipoprotein complex in an ATP-dependent manner. The sequence is that of Lipoprotein-releasing system ATP-binding protein LolD from Photobacterium profundum (strain SS9).